Reading from the N-terminus, the 148-residue chain is Large ribosomal subunit protein bL9 (148 aa).

This sequence belongs to the bacterial ribosomal protein bL9 family.

Binds to the 23S rRNA. This chain is Large ribosomal subunit protein bL9, found in Thermus thermophilus.